The sequence spans 1720 residues: 6-methylcalicylic acide synthase (1720 aa).

Residues 1 to 31 (MDKQSASGEIPAMRWEPYHRRDPRNAKELSK) are disordered. Residues 1–399 (MDKQSASGEI…GTVSHAVIEQ (399 aa)) enclose the Ketosynthase family 3 (KS3) domain. A compositionally biased stretch (basic and acidic residues) spans 16–30 (EPYHRRDPRNAKELS). Residues Cys-146, His-281, and His-321 each act as for beta-ketoacyl synthase activity in the active site. The tract at residues 509–823 (VWVFSGHGAQ…IAQLHCRGAE (315 aa)) is malonyl-CoA:ACP transacylase (MAT) domain. Positions 868–987 (HTLLGQRIGI…AYWARDIQEA (120 aa)) are N-terminal hotdog fold. Residues 868 to 1139 (HTLLGQRIGI…FTAMRFSEIE (272 aa)) form a dehydratase (DH) domain region. Positions 868–1144 (HTLLGQRIGI…FSEIEGTPGV (277 aa)) constitute a PKS/mFAS DH domain. The active-site Proton acceptor; for dehydratase activity is His-900. Residues 1001-1144 (GTRIRDDFSI…FSEIEGTPGV (144 aa)) are C-terminal hotdog fold. The Proton donor; for dehydratase activity role is filled by Asp-1065. The tract at residues 1148–1545 (MESLVHQLAW…AVAVQWTSWR (398 aa)) is product template (PT) domain. Residues 1644–1718 (VYLDEKIRGC…HLVGWFAEKV (75 aa)) enclose the Carrier domain. O-(pantetheine 4'-phosphoryl)serine is present on Ser-1678.

It localises to the cytoplasm. It is found in the cytosol. The catalysed reaction is 3 malonyl-CoA + acetyl-CoA + NADPH + 3 H(+) = 6-methylsalicylate + 3 CO2 + NADP(+) + 4 CoA + H2O. Its pathway is mycotoxin biosynthesis; patulin biosynthesis. 6-methylsalicylic acid synthase; part of the gene cluster that mediates the biosynthesis of patulin, an acetate-derived tetraketide mycotoxin produced by several fungal species that shows antimicrobial properties against several bacteria. PatK catalyzes the first step of the pathway which is the synthesis of 6-methylsalicylic acid via condensation of 1 acetate and 3 malonate units. The pathway begins with the synthesis of 6-methylsalicylic acid by the polyketide synthase (PKS) patK via condensation of acetate and malonate units. The 6-methylsalicylic acid decarboxylase patG then catalyzes the decarboxylation of 6-methylsalicylic acid to yield m-cresol (also known as 3-methylphenol). These first reactions occur in the cytosol. The intermediate m-cresol is then transported into the endoplasmic reticulum where the cytochrome P450 monooxygenase patH converts it to m-hydroxybenzyl alcohol, which is further converted to gentisyl alcohol by the cytochrome P450 monooxygenase patI. The oxidoreductases patJ and patO further convert gentisyl alcohol to isoepoxydon in the vacuole. PatN catalyzes then the transformation of isoepoxydon into phyllostine. The cluster protein patF is responsible for the conversion from phyllostine to neopatulin whereas the alcohol dehydrogenase patD converts neopatulin to E-ascladiol. The steps between isoepoxydon and E-ascladiol occur in the cytosol, and E-ascladiol is probably secreted to the extracellular space by one of the cluster-specific transporters patC or patM. Finally, the secreted patulin synthase patE catalyzes the conversion of E-ascladiol to patulin. The protein is 6-methylcalicylic acide synthase of Aspergillus clavatus (strain ATCC 1007 / CBS 513.65 / DSM 816 / NCTC 3887 / NRRL 1 / QM 1276 / 107).